Here is a 533-residue protein sequence, read N- to C-terminus: MNFPDFNNNNKDDQWERFSQLLFYDEEIGFWLDISRMKFSSEDIGSLQDNFKEACKSMKALEKGSIANIDESRQVGHYWLRNASLAPSKQTSNSIRNEINDIKTFGENILNGKITTAQGKPFTDVLWIGIGGSGLGPLLIVNSLQDNNKGLNFSFLDNVDPNGINKTLNSFRDKLSTTLFVVVSKSGGTPEPQIAMDQTRFFLDKNGLDWSSRAVAITMEGSSLDQIAENEKWLKRFDLPDWVGGRTSITASVGLLPLVLIGEDIDSFLDGASQMDQITRRIDIYKNPSALLAASWYFSGAGKGKRDMVVLPYQDRLQVFSKYLQQLVMESLGKEEDRNANKVNQGLAVYGNKGSTDQHAYVQQLRDGIDNFFVTFVEILEDCTEIPKINKKSPGDYLSGFLQGTRLALSENDRQSITITIKKFNSYTLGSLIALFERAVGIYAELIDINAYHQPGVEAGKKAASNILKLQSEIELLLEDGKLYSIEGIMNTIPGSSQESIYIILRHLSNNDHTYKFVGNLSDPRELQIKKAV.

The active-site Proton donor is the Glu330. Catalysis depends on residues His359 and Lys461.

It belongs to the GPI family.

Its subcellular location is the cytoplasm. The catalysed reaction is alpha-D-glucose 6-phosphate = beta-D-fructose 6-phosphate. It functions in the pathway carbohydrate biosynthesis; gluconeogenesis. The protein operates within carbohydrate degradation; glycolysis; D-glyceraldehyde 3-phosphate and glycerone phosphate from D-glucose: step 2/4. Functionally, catalyzes the reversible isomerization of glucose-6-phosphate to fructose-6-phosphate. This chain is Glucose-6-phosphate isomerase, found in Prochlorococcus marinus (strain SARG / CCMP1375 / SS120).